The sequence spans 334 residues: Malate dehydrogenase, cytoplasmic (334 aa).

Ser2 is subject to N-acetylserine. Residues Gly11–Ala17 and Asp42 each bind NAD(+). Substrate contacts are provided by Arg92 and Arg98. Residue Asn105 participates in NAD(+) binding. Lys110 carries the N6-succinyllysine modification. Gln112 lines the NAD(+) pocket. Residues Lys118 and Lys121 each carry the N6-acetyllysine modification. Val129 to Asn131 provides a ligand contact to NAD(+). 2 residues coordinate substrate: Asn131 and Arg162. The active-site Proton acceptor is His187. Residue Lys214 is modified to N6-succinyllysine. Phosphoserine is present on Ser217. At Arg230 the chain carries Omega-N-methylarginine. Ser241 carries the post-translational modification Phosphoserine. Position 298 is an N6-acetyllysine; alternate (Lys298). Residue Lys298 is modified to N6-succinyllysine; alternate. Ser309 bears the Phosphoserine mark. An N6-succinyllysine modification is found at Lys318. Ser333 is modified (phosphoserine).

The protein belongs to the LDH/MDH superfamily. MDH type 2 family. Homodimer. Post-translationally, ISGylated. Acetylation at Lys-118 dramatically enhances enzymatic activity and promotes adipogenic differentiation.

It is found in the cytoplasm. Its subcellular location is the cytosol. It carries out the reaction (S)-malate + NAD(+) = oxaloacetate + NADH + H(+). The enzyme catalyses (2R)-2-hydroxy-3-(4-hydroxyphenyl)propanoate + NAD(+) = 3-(4-hydroxyphenyl)pyruvate + NADH + H(+). It catalyses the reaction (S)-2-hydroxyglutarate + NAD(+) = 2-oxoglutarate + NADH + H(+). Catalyzes the reduction of aromatic alpha-keto acids in the presence of NADH. Plays essential roles in the malate-aspartate shuttle and the tricarboxylic acid cycle, important in mitochondrial NADH supply for oxidative phosphorylation. Catalyzes the reduction of 2-oxoglutarate to 2-hydroxyglutarate, leading to elevated reactive oxygen species (ROS). The chain is Malate dehydrogenase, cytoplasmic (MDH1) from Bos taurus (Bovine).